The primary structure comprises 607 residues: Glutamine--fructose-6-phosphate aminotransferase [isomerizing] (607 aa).

C2 functions as the Nucleophile; for GATase activity in the catalytic mechanism. One can recognise a Glutamine amidotransferase type-2 domain in the interval 2 to 218 (CGIIGYSGSK…DGDVVLVTKD (217 aa)). 2 consecutive SIS domains span residues 280–424 (FDEQ…KLGK) and 457–597 (IAKK…VDKP). Residue K602 is the For Fru-6P isomerization activity of the active site.

As to quaternary structure, homodimer.

It is found in the cytoplasm. The enzyme catalyses D-fructose 6-phosphate + L-glutamine = D-glucosamine 6-phosphate + L-glutamate. In terms of biological role, catalyzes the first step in hexosamine metabolism, converting fructose-6P into glucosamine-6P using glutamine as a nitrogen source. In Fusobacterium nucleatum subsp. nucleatum (strain ATCC 25586 / DSM 15643 / BCRC 10681 / CIP 101130 / JCM 8532 / KCTC 2640 / LMG 13131 / VPI 4355), this protein is Glutamine--fructose-6-phosphate aminotransferase [isomerizing].